Reading from the N-terminus, the 549-residue chain is MEEVVRFECRDSNLEIYVVQPGERLSIFGSCSFLCLAGNASINDYNLPAVSCESSNFMKISAPQRMDVPAILQVFKSGPSYKHARLKFRLKEVAPKNYEKIMEMIGTTEPSVFIFSKILDFAEETVSGVVSNFLIHSSIQKQIILPPHFFISRDDFIIYPQQQEAQLKSQMNRLNKLRNDGQRTTILPIGHKGAGKSNLMRSLVNRCLSNGYEHVYVLDCDIGQSEFTPCGCLSLTKVTSPILGKPHGHQRASFENSFFYGDITVRDINLYMDIFERLFNKFKVISEPGSVCIINSMGWVTDEGAEILDGITRVTDPELFVEIFRDQTEARYQFLNRAEHNIVEIFANNSIGVIGLPPQKRLPAALIRELTIVGYFSSRLPRPSLASFPKVAPYKLRFENVTICVPVDLLVEDSHVFSSINTQIMALCINNTDLKPRKLYGKDDLPSICVIDGNSPALQCIGFGIIRGVSVEERIIFVVTPVDLLKLEEPPVLVRGMRIQTPTMFYTADPYNRCPYVLNDLEQGNSDNTLDGLYQPSVNTTQFKRSRRF.

190 to 197 (GHKGAGKS) contributes to the ATP binding site.

Belongs to the Clp1 family. NOL9/GRC3 subfamily.

It is found in the nucleus. The protein localises to the nucleolus. Functionally, polynucleotide 5'-kinase involved in rRNA processing. This chain is Polynucleotide 5'-hydroxyl-kinase nol-9 (nol-9), found in Caenorhabditis elegans.